A 999-amino-acid chain; its full sequence is Desmoglein-3 (999 aa).

Residues 1–23 form the signal peptide; the sequence is MMGLFPRTTGALAIFVVVILVHG. The propeptide occupies 24-49; that stretch reads ELRIETKGQYDEEEMTMQQAKRRQKR. Cadherin domains lie at 50 to 158, 159 to 268, 269 to 383, and 386 to 499; these read EWVK…PVFS, QQIF…PMFR, DSQY…GIAF, and ASKT…VLEK. At 50–615 the chain is on the extracellular side; the sequence is EWVKFAKPCR…TRYGRPHSGR (566 aa). N-linked (GlcNAc...) asparagine glycans are attached at residues Asn110 and Asn180. N-linked (GlcNAc...) asparagine glycans are attached at residues Asn459 and Asn545. Residues 616 to 640 form a helical membrane-spanning segment; the sequence is LGPAAIGLLLLGLLLLLLAPLLLLT. At 641–999 the chain is on the cytoplasmic side; that stretch reads CDCGAGSTGG…CTEDPCSRLI (359 aa). Positions 642 to 714 are required for interaction with CTNND1 and localization at cell-cell junctions; sequence DCGAGSTGGV…NTYARGTAVE (73 aa). Desmoglein repeat repeat units follow at residues 910–935 and 936–966; these read LSTS…LVTE and TYSA…ERVI.

As to quaternary structure, homodimer. Part of a complex that contains DSG3, PKP1, YAP1 and YWHAG; the complex is required for localization of DSG3 and YAP1 to the cell membrane in keratinocytes. Interacts with PKP2. Interacts with CTNND1; the interaction facilitates DSG3 localization and retention at cell-cell junctions. Interacts with CDH1; the interaction is required for CDH1 localization to developing adherens junctions. Interacts with RAC1; the interaction is required for DSG3 translocation to cell-cell junctions, organization of cortical F-actin bundles and actin anchoring at cell-cell junctions. Interacts with DSC3; the interaction may limit the interaction of DSC3 with p38MAPK family members and therefore repress p38MAPK signaling activation. Expressed throughout the basal and spinous layer of the epidermis with weak expression in the granular layer (at protein level). Expressed in skin and mucosa (at protein level). Expressed in the basal layer of the outer root sheath of the telogen hair club, specifically at the cell membrane between the apex of the cells and the surrounding hair club (at protein level). Expression is less abundant between the lateral margins of the outer root sheath basal cells (at protein level). Also expressed in the tongue, tonsil and esophagus.

Its subcellular location is the cell membrane. The protein resides in the cell junction. It is found in the desmosome. The protein localises to the cytoplasm. It localises to the tight junction. Its function is as follows. A component of desmosome cell-cell junctions which are required for positive regulation of cellular adhesion. Required for adherens and desmosome junction assembly in response to mechanical force in keratinocytes. Required for desmosome-mediated cell-cell adhesion of cells surrounding the telogen hair club and the basal layer of the outer root sheath epithelium, consequently is essential for the anchoring of telogen hairs in the hair follicle. Required for the maintenance of the epithelial barrier via promoting desmosome-mediated intercellular attachment of suprabasal epithelium to basal cells. May play a role in the protein stability of the desmosome plaque components DSP, JUP, PKP1, PKP2 and PKP3. Required for YAP1 localization at the plasma membrane in keratinocytes in response to mechanical strain, via the formation of an interaction complex composed of DSG3, PKP1 and YWHAG. May also be involved in the positive regulation of YAP1 target gene transcription and as a result cell proliferation. Positively regulates cellular contractility and cell junction formation via organization of cortical F-actin bundles and anchoring of actin to tight junctions, in conjunction with RAC1. The cytoplasmic pool of DSG3 is required for the localization of CDH1 and CTNNB1 at developing adherens junctions, potentially via modulation of SRC activity. Inhibits keratinocyte migration via suppression of p38MAPK signaling, may therefore play a role in moderating wound healing. This Homo sapiens (Human) protein is Desmoglein-3.